The sequence spans 142 residues: Large ribosomal subunit protein uL13 (142 aa).

This sequence belongs to the universal ribosomal protein uL13 family. As to quaternary structure, part of the 50S ribosomal subunit.

In terms of biological role, this protein is one of the early assembly proteins of the 50S ribosomal subunit, although it is not seen to bind rRNA by itself. It is important during the early stages of 50S assembly. The sequence is that of Large ribosomal subunit protein uL13 from Stutzerimonas stutzeri (strain A1501) (Pseudomonas stutzeri).